The chain runs to 334 residues: Ferric enterobactin transport system permease protein FepD (334 aa).

Topologically, residues 1–9 (MSGSVAVTR) are periplasmic. A helical transmembrane segment spans residues 10 to 30 (AIAVPGLLLLLIIATALSLLI). The Cytoplasmic segment spans residues 31–63 (GAKSLPASVVLEAFSGTCQSADCTIVLDARLPR). Residues 64 to 84 (TLAGLLAGGALGLAGALMQTL) form a helical membrane-spanning segment. At 85–92 (TRNPLADP) the chain is on the periplasmic side. Residues 93-113 (GLLGVNAGASFAIVLGAALFG) traverse the membrane as a helical segment. Residues 114–120 (YSSAQEQ) lie on the Cytoplasmic side of the membrane. The chain crosses the membrane as a helical span at residues 121-141 (LAMAFAGALVASLIVAFTGSQ). At 142 to 151 (GGGQLSPVRL) the chain is on the periplasmic side. Residues 152–172 (TLAGVALAAVLEGLTSGIALL) traverse the membrane as a helical segment. The Cytoplasmic portion of the chain corresponds to 173-192 (NPDVYDQLRFWQAGSLDIRN). The chain crosses the membrane as a helical span at residues 193-213 (LHTLKVVLIPVLIAGATALLL). Topologically, residues 214-241 (SRALNSLSLGSDTATALGSRVARTQLIG) are periplasmic. A helical transmembrane segment spans residues 242–262 (LLAITVLCGSATAIVGPIAFI). Residues 263 to 279 (GLMMPHMARWLVGADHR) lie on the Cytoplasmic side of the membrane. Residues 280–300 (WSLPVTLLATPALLLFADIIG) traverse the membrane as a helical segment. The Periplasmic portion of the chain corresponds to 301–305 (RVIVP). Residues 306–326 (GELRVSVVSAFIGAPVLIFLV) form a helical membrane-spanning segment. Residues 327–334 (RRKTRGGA) lie on the Cytoplasmic side of the membrane.

This sequence belongs to the binding-protein-dependent transport system permease family. FecCD subfamily. The complex is composed of two ATP-binding proteins (FepC), two transmembrane proteins (FepD and FepG) and a solute-binding protein (FepB).

The protein localises to the cell inner membrane. Part of the ABC transporter complex FepBDGC involved in ferric enterobactin uptake. Responsible for the translocation of the substrate across the membrane. In Escherichia coli (strain K12), this protein is Ferric enterobactin transport system permease protein FepD (fepD).